The chain runs to 210 residues: MNHLKSFFTALVAGFILTACSSLDISDTRPADVKTIDKSDIQWQQHLKQIKQIQHYSSQGQIGYISSKERFSSRFEWNYAAPTDYTLKLYSTISSTSLVMQMHNTGMTISDNKGNRRSEADAKALVREIIGMDVPLEQFAYWLKGQPDEKADYQVGENHYLASFTYPLDGTVWSADYLNYHEEKQPALPKDILLKNANQTLKIRVDNWTF.

A signal peptide spans 1–19 (MNHLKSFFTALVAGFILTA). Cys-20 is lipidated: N-palmitoyl cysteine. The S-diacylglycerol cysteine moiety is linked to residue Cys-20.

The protein belongs to the LolB family. Monomer.

It is found in the cell outer membrane. In terms of biological role, plays a critical role in the incorporation of lipoproteins in the outer membrane after they are released by the LolA protein. This chain is Outer-membrane lipoprotein LolB, found in Mannheimia succiniciproducens (strain KCTC 0769BP / MBEL55E).